The primary structure comprises 517 residues: ATP synthase subunit alpha (517 aa).

Glycine 173–threonine 180 serves as a coordination point for ATP.

This sequence belongs to the ATPase alpha/beta chains family. In terms of assembly, F-type ATPases have 2 components, CF(1) - the catalytic core - and CF(0) - the membrane proton channel. CF(1) has five subunits: alpha(3), beta(3), gamma(1), delta(1), epsilon(1). CF(0) has three main subunits: a(1), b(2) and c(9-12). The alpha and beta chains form an alternating ring which encloses part of the gamma chain. CF(1) is attached to CF(0) by a central stalk formed by the gamma and epsilon chains, while a peripheral stalk is formed by the delta and b chains.

The protein localises to the cell inner membrane. The catalysed reaction is ATP + H2O + 4 H(+)(in) = ADP + phosphate + 5 H(+)(out). Produces ATP from ADP in the presence of a proton gradient across the membrane. The alpha chain is a regulatory subunit. This is ATP synthase subunit alpha from Legionella pneumophila (strain Lens).